The primary structure comprises 363 residues: S-adenosylmethionine:tRNA ribosyltransferase-isomerase (363 aa).

It belongs to the QueA family. In terms of assembly, monomer.

It localises to the cytoplasm. It carries out the reaction 7-aminomethyl-7-carbaguanosine(34) in tRNA + S-adenosyl-L-methionine = epoxyqueuosine(34) in tRNA + adenine + L-methionine + 2 H(+). It participates in tRNA modification; tRNA-queuosine biosynthesis. Its function is as follows. Transfers and isomerizes the ribose moiety from AdoMet to the 7-aminomethyl group of 7-deazaguanine (preQ1-tRNA) to give epoxyqueuosine (oQ-tRNA). This is S-adenosylmethionine:tRNA ribosyltransferase-isomerase from Haemophilus influenzae (strain 86-028NP).